Consider the following 429-residue polypeptide: 3-phosphoshikimate 1-carboxyvinyltransferase (429 aa).

Residues K23, S24, and R28 each contribute to the 3-phosphoshikimate site. K23 is a binding site for phosphoenolpyruvate. Residues G95 and R123 each coordinate phosphoenolpyruvate. The 3-phosphoshikimate site is built by S168, Q170, D316, and K343. Q170 serves as a coordination point for phosphoenolpyruvate. D316 acts as the Proton acceptor in catalysis. Residues R347 and R389 each coordinate phosphoenolpyruvate.

Belongs to the EPSP synthase family. As to quaternary structure, monomer.

Its subcellular location is the cytoplasm. It carries out the reaction 3-phosphoshikimate + phosphoenolpyruvate = 5-O-(1-carboxyvinyl)-3-phosphoshikimate + phosphate. The protein operates within metabolic intermediate biosynthesis; chorismate biosynthesis; chorismate from D-erythrose 4-phosphate and phosphoenolpyruvate: step 6/7. In terms of biological role, catalyzes the transfer of the enolpyruvyl moiety of phosphoenolpyruvate (PEP) to the 5-hydroxyl of shikimate-3-phosphate (S3P) to produce enolpyruvyl shikimate-3-phosphate and inorganic phosphate. This chain is 3-phosphoshikimate 1-carboxyvinyltransferase, found in Bacillus cereus (strain 03BB102).